The chain runs to 532 residues: SET and MYND domain-containing protein DDB_G0288495 (532 aa).

Residues 25 to 448 (PWIEVKSVSE…ENQELLITYI (424 aa)) form the SET domain. The MYND-type; degenerate zinc-finger motif lies at 70–116 (CTTCFKILLESNRHNFQTCPSCFQVNYCSNYCKQYSKIETKHTELEC). Residues 199–240 (INSKNNNEFENEEEEEEEQEQKGEGEQEENENNENNEKVKKK) adopt a coiled-coil conformation. Residues 204–234 (NNEFENEEEEEEEQEQKGEGEQEENENNENN) form a disordered region. Over residues 207-217 (FENEEEEEEEQ) the composition is skewed to acidic residues.

Belongs to the class V-like SAM-binding methyltransferase superfamily.

In terms of biological role, probable methyltransferase. The protein is SET and MYND domain-containing protein DDB_G0288495 of Dictyostelium discoideum (Social amoeba).